The primary structure comprises 190 residues: Interferon alpha-11 (190 aa).

The signal sequence occupies residues 1–23 (MARLCAFLMILIVMSYWSTCSLG). 2 disulfide bridges follow: C24/C122 and C52/C162. Residue N101 is glycosylated (N-linked (GlcNAc...) asparagine).

Belongs to the alpha/beta interferon family. Post-translationally, N-glycosylated.

Its subcellular location is the secreted. Its function is as follows. Has antiviral and antiproliferative activities. Produced by macrophages and stimulates the production of two enzymes: a protein kinase and an oligoadenylate synthetase. During viral infection, mediates antiviral effect, either directly by inducing interferon-stimulated genes, either indirectly through stimulation of natural killer cells enabling them to control viral replication. This Mus musculus (Mouse) protein is Interferon alpha-11 (Ifna11).